Reading from the N-terminus, the 439-residue chain is 23S rRNA (uracil(1939)-C(5))-methyltransferase RlmD (439 aa).

Residues 10-69 (KTQLNTRHQAVQVERLDHHGAGIAYLKKKPLFIDGALPGEEVVTQLVEEKSKFARGKLIK) enclose the TRAM domain. [4Fe-4S] cluster-binding residues include C82, C88, C91, and C169. Q272, F301, N306, E322, N349, and D370 together coordinate S-adenosyl-L-methionine. The active-site Nucleophile is C396.

Belongs to the class I-like SAM-binding methyltransferase superfamily. RNA M5U methyltransferase family. RlmD subfamily.

The enzyme catalyses uridine(1939) in 23S rRNA + S-adenosyl-L-methionine = 5-methyluridine(1939) in 23S rRNA + S-adenosyl-L-homocysteine + H(+). Catalyzes the formation of 5-methyl-uridine at position 1939 (m5U1939) in 23S rRNA. In Vibrio parahaemolyticus serotype O3:K6 (strain RIMD 2210633), this protein is 23S rRNA (uracil(1939)-C(5))-methyltransferase RlmD.